The primary structure comprises 215 residues: UPF0502 protein Ping_1905 (215 aa).

The protein belongs to the UPF0502 family.

The sequence is that of UPF0502 protein Ping_1905 from Psychromonas ingrahamii (strain DSM 17664 / CCUG 51855 / 37).